A 230-amino-acid polypeptide reads, in one-letter code: MSTENFDPTQHIEEPMNDLEIIHIHNKNNTYHLTKQILLDSMVPNNVHCFFYHILTKNSEEFNKIYGSYARLIVRNIEEADLYLNVDNDAFNHIINYIQTSKINGEKIYNENWKKIDDIIDLATILGMGNLVTTLRKLHPTEEEINRKIGIIKSTVRSSMFSLKYLFDCDPTMYQDIIDDAINRNKDLIIERYIKPTMYADNKVNSEIMSVICSLCSNYLVSRIISKTNH.

This is an uncharacterized protein from Acanthamoeba polyphaga (Amoeba).